A 336-amino-acid polypeptide reads, in one-letter code: IgLON family member 5 (336 aa).

The N-terminal stretch at 1–30 is a signal peptide; sequence MPPPAPGARLRLLAAAALAGLAVISRGLLS. 3 consecutive Ig-like C2-type domains span residues 33–122, 132–213, and 218–307; these read LEFS…QPYT, PARI…VLVT, and PTIT…MRLL. Residues N41, N49, N67, and N137 are each glycosylated (N-linked (GlcNAc...) asparagine). C54 and C112 form a disulfide bridge. Cystine bridges form between C154/C195 and C238/C291. N-linked (GlcNAc...) asparagine glycosylation occurs at N288.

Belongs to the immunoglobulin superfamily. IgLON family.

It is found in the secreted. This chain is IgLON family member 5 (Iglon5), found in Mus musculus (Mouse).